The primary structure comprises 483 residues: Regulatory protein ViaA (483 aa).

Belongs to the ViaA family. Homodimer. Interacts with RavA.

The protein localises to the cytoplasm. Component of the RavA-ViaA chaperone complex, which may act on the membrane to optimize the function of some of the respiratory chains. ViaA stimulates the ATPase activity of RavA. The chain is Regulatory protein ViaA from Escherichia coli O6:K15:H31 (strain 536 / UPEC).